The primary structure comprises 477 residues: Glycogen synthase (477 aa).

Lys15 is an ADP-alpha-D-glucose binding site.

It belongs to the glycosyltransferase 1 family. Bacterial/plant glycogen synthase subfamily.

The enzyme catalyses [(1-&gt;4)-alpha-D-glucosyl](n) + ADP-alpha-D-glucose = [(1-&gt;4)-alpha-D-glucosyl](n+1) + ADP + H(+). The protein operates within glycan biosynthesis; glycogen biosynthesis. Its function is as follows. Synthesizes alpha-1,4-glucan chains using ADP-glucose. This is Glycogen synthase from Klebsiella pneumoniae subsp. pneumoniae (strain ATCC 700721 / MGH 78578).